Here is a 345-residue protein sequence, read N- to C-terminus: Anthranilate phosphoribosyltransferase (345 aa).

5-phospho-alpha-D-ribose 1-diphosphate contacts are provided by residues Gly79, 82–83 (GD), Thr87, 89–92 (NVST), 106–114 (KHGNRAVSG), and Ser118. Position 79 (Gly79) interacts with anthranilate. Mg(2+) is bound at residue Ser91. Asn109 contacts anthranilate. Arg164 serves as a coordination point for anthranilate. Residues Asp223 and Glu224 each contribute to the Mg(2+) site.

It belongs to the anthranilate phosphoribosyltransferase family. Homodimer. The cofactor is Mg(2+).

The catalysed reaction is N-(5-phospho-beta-D-ribosyl)anthranilate + diphosphate = 5-phospho-alpha-D-ribose 1-diphosphate + anthranilate. It functions in the pathway amino-acid biosynthesis; L-tryptophan biosynthesis; L-tryptophan from chorismate: step 2/5. Its function is as follows. Catalyzes the transfer of the phosphoribosyl group of 5-phosphorylribose-1-pyrophosphate (PRPP) to anthranilate to yield N-(5'-phosphoribosyl)-anthranilate (PRA). In Saccharolobus islandicus (strain M.16.27) (Sulfolobus islandicus), this protein is Anthranilate phosphoribosyltransferase.